Consider the following 149-residue polypeptide: Arginine repressor (149 aa).

The protein belongs to the ArgR family.

It localises to the cytoplasm. It functions in the pathway amino-acid biosynthesis; L-arginine biosynthesis [regulation]. In terms of biological role, regulates arginine biosynthesis genes. This chain is Arginine repressor, found in Halalkalibacterium halodurans (strain ATCC BAA-125 / DSM 18197 / FERM 7344 / JCM 9153 / C-125) (Bacillus halodurans).